The chain runs to 418 residues: Argininosuccinate synthase (418 aa).

Residues Ala-14–Ser-22 and Ala-42 each bind ATP. The L-citrulline site is built by Tyr-94 and Ser-99. Residue Gly-124 participates in ATP binding. Residues Thr-126, Asn-130, and Asp-131 each coordinate L-aspartate. Asn-130 is an L-citrulline binding site. L-citrulline-binding residues include Arg-134, Ser-183, Ser-192, Glu-273, and Tyr-285.

Belongs to the argininosuccinate synthase family. Type 1 subfamily. Homotetramer.

It localises to the cytoplasm. It catalyses the reaction L-citrulline + L-aspartate + ATP = 2-(N(omega)-L-arginino)succinate + AMP + diphosphate + H(+). It participates in amino-acid biosynthesis; L-arginine biosynthesis; L-arginine from L-ornithine and carbamoyl phosphate: step 2/3. The protein is Argininosuccinate synthase of Colwellia psychrerythraea (strain 34H / ATCC BAA-681) (Vibrio psychroerythus).